We begin with the raw amino-acid sequence, 74 residues long: Large ribosomal subunit protein uL29 (74 aa).

It belongs to the universal ribosomal protein uL29 family.

This Nostoc sp. (strain PCC 7120 / SAG 25.82 / UTEX 2576) protein is Large ribosomal subunit protein uL29.